The primary structure comprises 305 residues: Superkiller complex protein 8 (305 aa).

WD repeat units lie at residues 14–57 (AHED…LELQ), 62–101 (GHQL…QIKS), 104–143 (AGPV…KEHS), 146–187 (TRGK…HTLE), 188–227 (GHAM…LAGT), 230–269 (GHGS…CVNT), and 272–305 (DHQD…DCPM).

Belongs to the SKI8 family. As to quaternary structure, component of the PAF1 complex. Component of the SKI complex.

The protein localises to the nucleus. It is found in the cytoplasm. In terms of biological role, component of the PAF1 complex (PAF1C) which has multiple functions during transcription by RNA polymerase II and is implicated in regulation of development and maintenance of embryonic stem cell pluripotency. PAF1C associates with RNA polymerase II through interaction with POLR2A CTD non-phosphorylated and 'Ser-2'- and 'Ser-5'-phosphorylated forms and is involved in transcriptional elongation, acting both independently and synergistically with TCEA1 and in cooperation with the DSIF complex and HTATSF1. Also acts as a component of the SKI complex, a multiprotein complex that assists the RNA-degrading exosome during the mRNA decay and quality-control pathways. The SKI complex catalyzes mRNA extraction from 80S ribosomal complexes in the 3'-5' direction and channels mRNA to the cytosolic exosome for degradation. The polypeptide is Superkiller complex protein 8 (skic8) (Danio rerio (Zebrafish)).